The sequence spans 499 residues: Interferon regulatory factor 5 (499 aa).

The Nuclear localization signal motif lies at 12 to 18; the sequence is PRRVRLK. The segment at residues 14–122 is a DNA-binding region (IRF tryptophan pentad repeat); it reads RVRLKPWLVA…QPYKVYEVCS (109 aa). The tract at residues 121–142 is disordered; it reads CSNGPAPAESQPSEDNAEEEEE. The short motif at 145-155 is the Nuclear export signal element; the sequence is LQKMLPGLSIT. Residues serine 153 and serine 294 each carry the phosphoserine; by TBK1 modification. Serine 302 is modified (phosphoserine). Glycyl lysine isopeptide (Lys-Gly) (interchain with G-Cter in ubiquitin) cross-links involve residues lysine 412 and lysine 413. Phosphoserine occurs at positions 432, 436, 438, 441, and 447.

Belongs to the IRF family. Homodimer, when phosphorylated. Interacts with TASL (via pLxIS motif); interaction takes place downstream of TLR7, TLR8 or TLR9, leading to its activation. Interacts with MYD88 and TRAF6. In terms of processing, phosphorylation of serine and threonine residues by IKBKB in a C-terminal autoinhibitory region, stimulates dimerization, transport into the nucleus, assembly with the coactivator CBP/EP300 and initiation of transcription. Post-translationally, 'Lys-63'-linked polyubiquitination by TRAF6 is required for activation.

It localises to the cytoplasm. The protein localises to the nucleus. With respect to regulation, maintained as a monomer in an autoinhibited state. Phosphorylation and activation follow the following steps: innate adapter protein TASL recruits IRF5, thereby licensing IRF5 for phosphorylation by IKBKB. Phosphorylated IRF5 dissociates from the adapter proteins, dimerizes, and then enters the nucleus to induce IFNs. Functionally, transcription factor that plays a critical role in innate immunity by activating expression of type I interferon (IFN) IFNA and INFB and inflammatory cytokines downstream of endolysosomal toll-like receptors TLR7, TLR8 and TLR9. Regulates the transcription of type I IFN genes (IFN-alpha and IFN-beta) and IFN-stimulated genes (ISG) by binding to an interferon-stimulated response element (ISRE) in their promoters. Can efficiently activate both the IFN-beta (IFNB) and the IFN-alpha (IFNA) genes and mediate their induction downstream of the TLR-activated, MyD88-dependent pathway. The polypeptide is Interferon regulatory factor 5 (Bos taurus (Bovine)).